We begin with the raw amino-acid sequence, 254 residues long: Ribose-5-phosphate isomerase A (254 aa).

Substrate contacts are provided by residues 45-48 (TGST), 105-108 (DGAD), and 118-121 (KGGG). Glu-127 (proton acceptor) is an active-site residue. Lys-145 is a substrate binding site.

This sequence belongs to the ribose 5-phosphate isomerase family. Homodimer.

It carries out the reaction aldehydo-D-ribose 5-phosphate = D-ribulose 5-phosphate. It participates in carbohydrate degradation; pentose phosphate pathway; D-ribose 5-phosphate from D-ribulose 5-phosphate (non-oxidative stage): step 1/1. Catalyzes the reversible conversion of ribose-5-phosphate to ribulose 5-phosphate. The polypeptide is Ribose-5-phosphate isomerase A (Treponema pallidum subsp. pallidum (strain SS14)).